A 282-amino-acid chain; its full sequence is Bis(5'-nucleosyl)-tetraphosphatase, symmetrical (282 aa).

Belongs to the Ap4A hydrolase family.

It catalyses the reaction P(1),P(4)-bis(5'-adenosyl) tetraphosphate + H2O = 2 ADP + 2 H(+). Hydrolyzes diadenosine 5',5'''-P1,P4-tetraphosphate to yield ADP. This Salmonella paratyphi A (strain ATCC 9150 / SARB42) protein is Bis(5'-nucleosyl)-tetraphosphatase, symmetrical.